Here is a 185-residue protein sequence, read N- to C-terminus: ATP synthase subunit delta (185 aa).

It belongs to the ATPase delta chain family. In terms of assembly, F-type ATPases have 2 components, F(1) - the catalytic core - and F(0) - the membrane proton channel. F(1) has five subunits: alpha(3), beta(3), gamma(1), delta(1), epsilon(1). CF(0) has four main subunits: a(1), b(1), b'(1) and c(10-14). The alpha and beta chains form an alternating ring which encloses part of the gamma chain. F(1) is attached to F(0) by a central stalk formed by the gamma and epsilon chains, while a peripheral stalk is formed by the delta, b and b' chains.

Its subcellular location is the cellular thylakoid membrane. Its function is as follows. F(1)F(0) ATP synthase produces ATP from ADP in the presence of a proton or sodium gradient. F-type ATPases consist of two structural domains, F(1) containing the extramembraneous catalytic core and F(0) containing the membrane proton channel, linked together by a central stalk and a peripheral stalk. During catalysis, ATP synthesis in the catalytic domain of F(1) is coupled via a rotary mechanism of the central stalk subunits to proton translocation. Functionally, this protein is part of the stalk that links CF(0) to CF(1). It either transmits conformational changes from CF(0) to CF(1) or is implicated in proton conduction. The sequence is that of ATP synthase subunit delta from Crocosphaera subtropica (strain ATCC 51142 / BH68) (Cyanothece sp. (strain ATCC 51142)).